A 906-amino-acid polypeptide reads, in one-letter code: Protein translocase subunit SecA (906 aa).

ATP is bound by residues glutamine 87, 105–109 (GEGKT), and aspartate 507. A compositionally biased stretch (basic and acidic residues) spans 553-563 (RHESRRIDNQL). 2 disordered regions span residues 553–576 (RHESRRIDNQLRGRSGRQGDPGSS) and 854–906 (LEEP…GRLA). The Zn(2+) site is built by cysteine 890, cysteine 892, cysteine 901, and histidine 902. A compositionally biased stretch (basic residues) spans 896–906 (KKYKQCHGRLA).

Belongs to the SecA family. Monomer and homodimer. Part of the essential Sec protein translocation apparatus which comprises SecA, SecYEG and auxiliary proteins SecDF-YajC and YidC. Zn(2+) is required as a cofactor.

The protein localises to the cell inner membrane. Its subcellular location is the cytoplasm. It carries out the reaction ATP + H2O + cellular proteinSide 1 = ADP + phosphate + cellular proteinSide 2.. Functionally, part of the Sec protein translocase complex. Interacts with the SecYEG preprotein conducting channel. Has a central role in coupling the hydrolysis of ATP to the transfer of proteins into and across the cell membrane, serving both as a receptor for the preprotein-SecB complex and as an ATP-driven molecular motor driving the stepwise translocation of polypeptide chains across the membrane. The chain is Protein translocase subunit SecA from Methylococcus capsulatus (strain ATCC 33009 / NCIMB 11132 / Bath).